The following is a 232-amino-acid chain: Probable proteasome subunit alpha type-5 (232 aa).

It belongs to the peptidase T1A family. As to quaternary structure, the 26S proteasome consists of a 20S proteasome core and two 19S regulatory subunits. The 20S proteasome core is composed of 28 subunits that are arranged in four stacked rings, resulting in a barrel-shaped structure. The two end rings are each formed by seven alpha subunits, and the two central rings are each formed by seven beta subunits. The catalytic chamber with the active sites is on the inside of the barrel.

It is found in the cytoplasm. Its subcellular location is the nucleus. In terms of biological role, the proteasome degrades poly-ubiquitinated proteins in the cytoplasm and in the nucleus. It is essential for the regulated turnover of proteins and for the removal of misfolded proteins. The proteasome is a multicatalytic proteinase complex that is characterized by its ability to cleave peptides with Arg, Phe, Tyr, Leu, and Glu adjacent to the leaving group at neutral or slightly basic pH. It has an ATP-dependent proteolytic activity. The protein is Probable proteasome subunit alpha type-5 (PUP2) of Encephalitozoon cuniculi (strain GB-M1) (Microsporidian parasite).